The primary structure comprises 371 residues: Carbamoyl phosphate synthase small chain (371 aa).

Positions Met1–Val190 are CPSase. L-glutamine contacts are provided by Ser47, Gly237, and Gly239. Positions Leu189–Gly371 constitute a Glutamine amidotransferase type-1 domain. The active-site Nucleophile is the Cys264. 4 residues coordinate L-glutamine: Leu265, Gln268, Asn306, and Phe309. Catalysis depends on residues His348 and Glu350.

The protein belongs to the CarA family. In terms of assembly, composed of two chains; the small (or glutamine) chain promotes the hydrolysis of glutamine to ammonia, which is used by the large (or ammonia) chain to synthesize carbamoyl phosphate. Tetramer of heterodimers (alpha,beta)4.

It catalyses the reaction hydrogencarbonate + L-glutamine + 2 ATP + H2O = carbamoyl phosphate + L-glutamate + 2 ADP + phosphate + 2 H(+). The enzyme catalyses L-glutamine + H2O = L-glutamate + NH4(+). The protein operates within amino-acid biosynthesis; L-arginine biosynthesis; carbamoyl phosphate from bicarbonate: step 1/1. It functions in the pathway pyrimidine metabolism; UMP biosynthesis via de novo pathway; (S)-dihydroorotate from bicarbonate: step 1/3. Functionally, small subunit of the glutamine-dependent carbamoyl phosphate synthetase (CPSase). CPSase catalyzes the formation of carbamoyl phosphate from the ammonia moiety of glutamine, carbonate, and phosphate donated by ATP, constituting the first step of 2 biosynthetic pathways, one leading to arginine and/or urea and the other to pyrimidine nucleotides. The small subunit (glutamine amidotransferase) binds and cleaves glutamine to supply the large subunit with the substrate ammonia. The protein is Carbamoyl phosphate synthase small chain of Aquifex aeolicus (strain VF5).